A 413-amino-acid chain; its full sequence is MTQDIIDNIAAEGISYYTPAQVPPAGTQVEGSTKLFSPLTIRGVTFPNRLFLAPLCQYSAKDGYANDWHLTHIGGIVQRGPGLAIMEATAVQKVGRITPQDLGLYDDGHIEPLKRITEFAHSQSQKIGIQLAHAGRKASAVAPWLSGNAMAVKEVGGWPDDIVAPSAIPQEEGINAVPKVLTGEDIGVLKKDWAEAAKRAVRANFDAIEIHAAHGYLLHQFLSPVSNRRTDKYGGSFENRVRILLEICEEVRAVIPTAMPLLVRISATDWFEFDDNLTKEFPESWTVAQSIRLALLLADRGVDLVDVSSGGIHAKSAIAIRSGPGYQVHFAQEIKKAVGEKLLISAVGGIKTGALAEEVVQSGIDAVQAGRWFQQNPGLVRAFANELGVKVRMATQIDWSFEGRGKKAKKSSL.

Residue 53 to 56 (APLC) coordinates FMN. Residue Tyr-58 coordinates substrate. FMN is bound by residues Ala-88 and Gln-130. A substrate-binding site is contributed by 211 to 214 (HAAH). FMN-binding positions include Arg-264 and 370–371 (GR).

Belongs to the NADH:flavin oxidoreductase/NADH oxidase family. NamA subfamily. The cofactor is FMN.

It catalyses the reaction A + NADPH + H(+) = AH2 + NADP(+). It functions in the pathway secondary metabolite biosynthesis. Functionally, NADPH dehydrogenase; part of the gene cluster that mediates the biosynthesis of aflavarin, a bicoumarin that exhibits anti-insectan activity against the fungivorous beetle C.hemipterus. The protein is NADPH dehydrogenase afvA of Aspergillus flavus (strain ATCC 200026 / FGSC A1120 / IAM 13836 / NRRL 3357 / JCM 12722 / SRRC 167).